Here is a 240-residue protein sequence, read N- to C-terminus: Sugar fermentation stimulation protein homolog (240 aa).

The protein belongs to the SfsA family.

The polypeptide is Sugar fermentation stimulation protein homolog (Saccharolobus islandicus (strain M.14.25 / Kamchatka #1) (Sulfolobus islandicus)).